The sequence spans 529 residues: Phosphoenolpyruvate carboxykinase (ATP) (529 aa).

Residues arginine 55, tyrosine 190, and lysine 196 each coordinate substrate. Residues lysine 196, histidine 215, and 231-239 (GLSGTGKTT) each bind ATP. Lysine 196 and histidine 215 together coordinate Mn(2+). Aspartate 252 provides a ligand contact to Mn(2+). Residues glutamate 280, arginine 317, and threonine 442 each coordinate ATP. Arginine 317 lines the substrate pocket.

This sequence belongs to the phosphoenolpyruvate carboxykinase (ATP) family. It depends on Mn(2+) as a cofactor.

It localises to the cytoplasm. The enzyme catalyses oxaloacetate + ATP = phosphoenolpyruvate + ADP + CO2. The protein operates within carbohydrate biosynthesis; gluconeogenesis. Its function is as follows. Involved in the gluconeogenesis. Catalyzes the conversion of oxaloacetate (OAA) to phosphoenolpyruvate (PEP) through direct phosphoryl transfer between the nucleoside triphosphate and OAA. The sequence is that of Phosphoenolpyruvate carboxykinase (ATP) from Deinococcus geothermalis (strain DSM 11300 / CIP 105573 / AG-3a).